The following is a 359-amino-acid chain: Phosphoserine aminotransferase (359 aa).

An L-glutamate-binding site is contributed by arginine 41. Pyridoxal 5'-phosphate-binding positions include 75–76 (AS), tryptophan 101, threonine 152, aspartate 171, and glutamine 194. Lysine 195 is subject to N6-(pyridoxal phosphate)lysine. Residue 236-237 (NT) participates in pyridoxal 5'-phosphate binding.

Belongs to the class-V pyridoxal-phosphate-dependent aminotransferase family. SerC subfamily. As to quaternary structure, homodimer. It depends on pyridoxal 5'-phosphate as a cofactor.

It is found in the cytoplasm. The enzyme catalyses O-phospho-L-serine + 2-oxoglutarate = 3-phosphooxypyruvate + L-glutamate. It catalyses the reaction 4-(phosphooxy)-L-threonine + 2-oxoglutarate = (R)-3-hydroxy-2-oxo-4-phosphooxybutanoate + L-glutamate. It functions in the pathway amino-acid biosynthesis; L-serine biosynthesis; L-serine from 3-phospho-D-glycerate: step 2/3. The protein operates within cofactor biosynthesis; pyridoxine 5'-phosphate biosynthesis; pyridoxine 5'-phosphate from D-erythrose 4-phosphate: step 3/5. Catalyzes the reversible conversion of 3-phosphohydroxypyruvate to phosphoserine and of 3-hydroxy-2-oxo-4-phosphonooxybutanoate to phosphohydroxythreonine. This chain is Phosphoserine aminotransferase, found in Acinetobacter baumannii (strain AB307-0294).